Reading from the N-terminus, the 198-residue chain is Recombination protein RecR (198 aa).

The segment at 57–72 (CSVCGHITDRDPCYIC) adopts a C4-type zinc-finger fold. The Toprim domain occupies 80-175 (SVVCVVQEPK…KVTRIAHGLP (96 aa)).

This sequence belongs to the RecR family.

In terms of biological role, may play a role in DNA repair. It seems to be involved in an RecBC-independent recombinational process of DNA repair. It may act with RecF and RecO. This chain is Recombination protein RecR, found in Bacillus cytotoxicus (strain DSM 22905 / CIP 110041 / 391-98 / NVH 391-98).